Consider the following 100-residue polypeptide: UPF0213 protein FN1575 (100 aa).

The GIY-YIG domain maps to 1–77; sequence MAYYLYMLRC…KYIKKKKENI (77 aa).

The protein belongs to the UPF0213 family.

This chain is UPF0213 protein FN1575, found in Fusobacterium nucleatum subsp. nucleatum (strain ATCC 25586 / DSM 15643 / BCRC 10681 / CIP 101130 / JCM 8532 / KCTC 2640 / LMG 13131 / VPI 4355).